A 449-amino-acid chain; its full sequence is Phosphoglucosamine mutase (449 aa).

Serine 101 (phosphoserine intermediate) is an active-site residue. 4 residues coordinate Mg(2+): serine 101, aspartate 242, aspartate 244, and aspartate 246. Serine 101 is modified (phosphoserine).

Belongs to the phosphohexose mutase family. The cofactor is Mg(2+). In terms of processing, activated by phosphorylation.

The enzyme catalyses alpha-D-glucosamine 1-phosphate = D-glucosamine 6-phosphate. In terms of biological role, catalyzes the conversion of glucosamine-6-phosphate to glucosamine-1-phosphate. In Bradyrhizobium sp. (strain ORS 278), this protein is Phosphoglucosamine mutase.